The primary structure comprises 389 residues: Sulfate adenylyltransferase (389 aa).

Belongs to the sulfate adenylyltransferase family.

It carries out the reaction sulfate + ATP + H(+) = adenosine 5'-phosphosulfate + diphosphate. The protein operates within sulfur metabolism; hydrogen sulfide biosynthesis; sulfite from sulfate: step 1/3. This is Sulfate adenylyltransferase from Hyperthermus butylicus (strain DSM 5456 / JCM 9403 / PLM1-5).